We begin with the raw amino-acid sequence, 780 residues long: E3 SUMO-protein ligase gei-17 (780 aa).

The segment at 181-210 (APLHSSFPNHGRSSQQSLQKSEKSNRPKKM) is disordered. Positions 203–367 (KSNRPKKMYA…AAGVYFVHRV (165 aa)) constitute a PINIT domain. The SP-RING-type zinc finger occupies 400-485 (GEDDIAMDRL…LAKVDKNTTE (86 aa)). Zn(2+)-binding residues include cysteine 431, histidine 433, cysteine 454, and cysteine 457. Residues 519–530 (GTASCSSTNGNG) are compositionally biased toward polar residues. Disordered stretches follow at residues 519–544 (GTAS…ADDD), 560–594 (IMNS…KTKD), and 732–755 (QQHH…SFYA). Residues 732–749 (QQHHLQQQQQQQQSPQIM) are compositionally biased toward low complexity.

It belongs to the PIAS family. In terms of assembly, may interact with gex-3.

Its pathway is protein modification; protein sumoylation. Functionally, functions as an E3-type smo-1 ligase. Mediates smo-1 conjugation to air-2 in vitro and is required for proper chromosome alignment. In the early embryo, specifically suppresses checkpoint activation in response to DNA damage, maybe by promoting mus-101 sumoylation. In embryos, plays a role in determining telomere localization in the nucleus. Acts with pie-1 to promote piRNA-mediated silencing and fertility in the adult germline. In Caenorhabditis elegans, this protein is E3 SUMO-protein ligase gei-17.